The sequence spans 504 residues: ATP synthase subunit alpha, chloroplastic (504 aa).

170-177 (GDRQTGKT) is a binding site for ATP.

This sequence belongs to the ATPase alpha/beta chains family. As to quaternary structure, F-type ATPases have 2 components, CF(1) - the catalytic core - and CF(0) - the membrane proton channel. CF(1) has five subunits: alpha(3), beta(3), gamma(1), delta(1), epsilon(1). CF(0) has four main subunits: a, b, b' and c.

It is found in the plastid. The protein localises to the chloroplast thylakoid membrane. The enzyme catalyses ATP + H2O + 4 H(+)(in) = ADP + phosphate + 5 H(+)(out). In terms of biological role, produces ATP from ADP in the presence of a proton gradient across the membrane. The alpha chain is a regulatory subunit. The chain is ATP synthase subunit alpha, chloroplastic from Triticum aestivum (Wheat).